Consider the following 204-residue polypeptide: MNSQPLRVGIGGPVGSGKTALTLALCRALRERYNIAVVTNDIYTQEDAQFLVRNEALEPERIIGVETGGCPHTAIREDASINLEAVEQLNRRFPGLDLIIVESGGDNLSATFSPELSDLTLYVIDVSAGDKLPRKGGPGICKSDLLVINKVDLAPMVGASLEVMERDTLKMRGDKPFVFSNQKIGQGLDEIIAFIERQGMLTAA.

Residue 12–19 (GPVGSGKT) coordinates GTP.

It belongs to the SIMIBI class G3E GTPase family. UreG subfamily. As to quaternary structure, homodimer. UreD, UreF and UreG form a complex that acts as a GTP-hydrolysis-dependent molecular chaperone, activating the urease apoprotein by helping to assemble the nickel containing metallocenter of UreC. The UreE protein probably delivers the nickel.

The protein resides in the cytoplasm. Facilitates the functional incorporation of the urease nickel metallocenter. This process requires GTP hydrolysis, probably effectuated by UreG. In Ectopseudomonas mendocina (strain ymp) (Pseudomonas mendocina), this protein is Urease accessory protein UreG.